The following is a 352-amino-acid chain: Keratocan (352 aa).

An N-terminal signal peptide occupies residues 1–20; it reads MASTICFILWVVFVTDTVWT. In terms of domain architecture, LRRNT spans 33–71; that stretch reads EDWTMHDFDCPRECFCPPSFPTALYCENRGLKEIPAIPS. Intrachain disulfides connect Cys-42–Cys-48 and Cys-46–Cys-58. 8 LRR repeats span residues 72–93, 96–117, 122–142, 143–164, 167–180, 193–214, 215–235, and 238–258; these read RIWY…PFEN, QLRW…KGAL, KLLF…PLPR, SLEQ…TFSN, NLTL…KLLD, NLMQ…LPAN, TMQV…YFNV, and KVAF…PSSG. N-linked (GlcNAc...) (keratan sulfate) asparagine glycosylation is present at Asn-93. Asn-167 carries N-linked (GlcNAc...) (keratan sulfate) asparagine glycosylation. N-linked (GlcNAc...) asparagine glycosylation is present at Asn-222. N-linked (GlcNAc...) (keratan sulfate) asparagine glycosylation occurs at Asn-260. 2 LRR repeats span residues 263–282 and 283–304; these read SILD…KISA and HLQH…VICP. A glycan (N-linked (GlcNAc...) asparagine) is linked at Asn-298. Residues Cys-303 and Cys-343 are joined by a disulfide bond.

Belongs to the small leucine-rich proteoglycan (SLRP) family. SLRP class II subfamily. In terms of processing, binds three long, highly sulfated keratan sulfate chains in the cornea but short, non-sulfated poly(N-acetyllactosamine) chains in other tissues. The N-terminus is blocked. Abundant in cornea and sclera but also found in other tissues.

It localises to the secreted. Its subcellular location is the extracellular space. The protein localises to the extracellular matrix. In terms of biological role, may be important in developing and maintaining corneal transparency and for the structure of the stromal matrix. This Bos taurus (Bovine) protein is Keratocan (KERA).